Consider the following 303-residue polypeptide: Probable 5-dehydro-4-deoxyglucarate dehydratase (303 aa).

This sequence belongs to the DapA family.

It catalyses the reaction 5-dehydro-4-deoxy-D-glucarate + H(+) = 2,5-dioxopentanoate + CO2 + H2O. The protein operates within carbohydrate acid metabolism; D-glucarate degradation; 2,5-dioxopentanoate from D-glucarate: step 2/2. In Pseudomonas putida (strain W619), this protein is Probable 5-dehydro-4-deoxyglucarate dehydratase.